A 616-amino-acid chain; its full sequence is Dihydroxy-acid dehydratase 1 (616 aa).

Asp-81 is a binding site for Mg(2+). Residue Cys-122 participates in [2Fe-2S] cluster binding. The Mg(2+) site is built by Asp-123 and Lys-124. Residue Lys-124 is modified to N6-carboxylysine. Residue Cys-195 coordinates [2Fe-2S] cluster. Glu-491 is a Mg(2+) binding site. The Proton acceptor role is filled by Ser-517.

This sequence belongs to the IlvD/Edd family. Homodimer. [2Fe-2S] cluster serves as cofactor. Requires Mg(2+) as cofactor.

It carries out the reaction (2R)-2,3-dihydroxy-3-methylbutanoate = 3-methyl-2-oxobutanoate + H2O. It catalyses the reaction (2R,3R)-2,3-dihydroxy-3-methylpentanoate = (S)-3-methyl-2-oxopentanoate + H2O. It participates in amino-acid biosynthesis; L-isoleucine biosynthesis; L-isoleucine from 2-oxobutanoate: step 3/4. It functions in the pathway amino-acid biosynthesis; L-valine biosynthesis; L-valine from pyruvate: step 3/4. Functionally, functions in the biosynthesis of branched-chain amino acids. Catalyzes the dehydration of (2R,3R)-2,3-dihydroxy-3-methylpentanoate (2,3-dihydroxy-3-methylvalerate) into 2-oxo-3-methylpentanoate (2-oxo-3-methylvalerate) and of (2R)-2,3-dihydroxy-3-methylbutanoate (2,3-dihydroxyisovalerate) into 2-oxo-3-methylbutanoate (2-oxoisovalerate), the penultimate precursor to L-isoleucine and L-valine, respectively. This chain is Dihydroxy-acid dehydratase 1, found in Bradyrhizobium diazoefficiens (strain JCM 10833 / BCRC 13528 / IAM 13628 / NBRC 14792 / USDA 110).